The following is a 389-amino-acid chain: Large envelope protein (389 aa).

Methionine 1 is modified (N-acetylmethionine). A lipid anchor (N-myristoyl glycine; by host) is attached at glycine 2. The interval 2–108 (GQNLSTSNPL…PPLRDTHPQA (107 aa)) is pre-S1. The segment at 2-163 (GQNLSTSNPL…FSTTGDPAPN (162 aa)) is pre-S. At 2-170 (GQNLSTSNPL…APNMENITSG (169 aa)) the chain is on the virion surface; in external conformation side. Residues 2–242 (GQNLSTSNPL…PGYRWMCLRR (241 aa)) lie on the Intravirion; in internal conformation side of the membrane. Positions 75–107 (TTLPANPPPASTNRQSGRQPTPLSPPLRDTHPQ) are disordered. A compositionally biased stretch (polar residues) spans 85 to 95 (STNRQSGRQPT). The pre-S2 stretch occupies residues 109–163 (MQWNSTTFHQALQDPRVRGLYFPAGGSSSGTLNPVPNTASHISSVFSTTGDPAPN). The helical transmembrane segment at 171–191 (FLGPLLVLQAGFFLLTKILTI) threads the bilayer. The Intravirion; in external conformation portion of the chain corresponds to 192 to 242 (PQSLDSWWTSLNFLGGAPVCLGQNSQSPTSNHSPTSCPPICPGYRWMCLRR). Residues 243–263 (FIIFLFILLLCLIFLLVLLDY) traverse the membrane as a helical segment. The Virion surface portion of the chain corresponds to 264-337 (QGMLPVCPLI…WASVRFSWLS (74 aa)). Asparagine 309 carries N-linked (GlcNAc...) asparagine; by host glycosylation. A helical transmembrane segment spans residues 338–358 (LLAPFVQWFAGLSPTVWLLAI). Residues 359-364 (WMMWYW) are Intravirion-facing. Residues 365–387 (GPNLYNILSPFIPLLPIFFCLWV) traverse the membrane as a helical segment. The Virion surface segment spans residues 388-389 (YI).

It belongs to the orthohepadnavirus major surface antigen family. In terms of assembly, in its internal form (Li-HBsAg), interacts with the capsid protein and with the isoform S. Interacts with host chaperone CANX. As to quaternary structure, associates with host chaperone CANX through its pre-S2 N glycan; this association may be essential for isoform M proper secretion. Interacts with isoform L. Interacts with the antigens of satellite virus HDV (HDVAgs); this interaction is required for encapsidation of HDV genomic RNA. Post-translationally, isoform M is N-terminally acetylated by host at a ratio of 90%, and N-glycosylated by host at the pre-S2 region. In terms of processing, myristoylated.

The protein localises to the virion membrane. Its function is as follows. The large envelope protein exists in two topological conformations, one which is termed 'external' or Le-HBsAg and the other 'internal' or Li-HBsAg. In its external conformation the protein attaches the virus to cell receptors and thereby initiating infection. This interaction determines the species specificity and liver tropism. This attachment induces virion internalization predominantly through caveolin-mediated endocytosis. The large envelope protein also assures fusion between virion membrane and endosomal membrane. In its internal conformation the protein plays a role in virion morphogenesis and mediates the contact with the nucleocapsid like a matrix protein. In terms of biological role, the middle envelope protein plays an important role in the budding of the virion. It is involved in the induction of budding in a nucleocapsid independent way. In this process the majority of envelope proteins bud to form subviral lipoprotein particles of 22 nm of diameter that do not contain a nucleocapsid. The polypeptide is Large envelope protein (Pan troglodytes (Chimpanzee)).